Consider the following 738-residue polypeptide: Putative RNA-binding protein EEED8.10 (738 aa).

An RRM domain is found at 112-201 (RKIVVSNISA…QVMVVSAYVS (90 aa)). The tract at residues 211-237 (LSDDVGSREDTPLSRASSTQSLASGSE) is disordered. The span at 224–237 (SRASSTQSLASGSE) shows a compositional bias: polar residues. Residues 239–297 (SFNLGNVPDKILRRVISFLPIHETIRLERVNKKFMEESIKSWELVNKIALARETVFNKQ) form the F-box domain.

The polypeptide is Putative RNA-binding protein EEED8.10 (Caenorhabditis elegans).